The chain runs to 319 residues: uncharacterized protein (319 aa).

The N-terminal stretch at 1 to 27 is a signal peptide; it reads MYKKFVPFAVFLFLFFVSFEMMENPHA. Residues 130–306 form the NodB homology domain; it reads PMVAFLINVA…QIKDKGYALG (177 aa).

The protein belongs to the polysaccharide deacetylase family.

This is an uncharacterized protein from Bacillus subtilis (strain 168).